A 106-amino-acid polypeptide reads, in one-letter code: uncharacterized protein (106 aa).

It belongs to the HesB/IscA family.

This is an uncharacterized protein from Rhodobacter capsulatus (Rhodopseudomonas capsulata).